Reading from the N-terminus, the 47-residue chain is Large ribosomal subunit protein bL33 (47 aa).

Belongs to the bacterial ribosomal protein bL33 family.

This chain is Large ribosomal subunit protein bL33, found in Staphylococcus saprophyticus.